A 610-amino-acid chain; its full sequence is E-selectin (610 aa).

An N-terminal signal peptide occupies residues 1-21 (MIASQFLSALTLVLLIKESGA). In terms of domain architecture, C-type lectin spans 22-139 (WSYNTSTEAM…CSKKKLALCY (118 aa)). Residues 22–556 (WSYNTSTEAM…CEAPTESNIP (535 aa)) lie on the Extracellular side of the membrane. Residue asparagine 25 is glycosylated (N-linked (GlcNAc...) asparagine). Intrachain disulfides connect cysteine 40–cysteine 138, cysteine 111–cysteine 130, cysteine 143–cysteine 154, cysteine 148–cysteine 163, and cysteine 165–cysteine 174. Ca(2+)-binding residues include glutamate 101, asparagine 103, and glutamate 109. A carbohydrate-binding positions include 101-109 (EPNNRQKDE), 113-118 (EIYIKR), and 126-128 (NDE). Ca(2+) is bound by residues asparagine 126 and aspartate 127. Residues 140 to 175 (TAACTNTSCSGHGECVETINNYTCKCDPGFSGLKCE) enclose the EGF-like domain. N-linked (GlcNAc...) asparagine glycans are attached at residues asparagine 145 and asparagine 160. 6 Sushi domains span residues 178–239 (VNCT…ACNV), 240–301 (VECD…TCKA), 303–364 (TCRA…VCEA), 366–427 (QCTA…TCEA), 429–490 (RCDA…SCQV), and 491–549 (VKCS…TCEA). Residues asparagine 179, asparagine 199, and asparagine 203 are each glycosylated (N-linked (GlcNAc...) asparagine). Intrachain disulfides connect cysteine 180/cysteine 224, cysteine 193/cysteine 206, cysteine 210/cysteine 237, cysteine 242/cysteine 286, cysteine 255/cysteine 268, cysteine 272/cysteine 299, cysteine 304/cysteine 349, cysteine 335/cysteine 362, cysteine 367/cysteine 412, cysteine 398/cysteine 425, cysteine 430/cysteine 475, cysteine 461/cysteine 488, cysteine 493/cysteine 534, and cysteine 520/cysteine 547. Asparagine 265 is a glycosylation site (N-linked (GlcNAc...) asparagine). 2 N-linked (GlcNAc...) asparagine glycosylation sites follow: asparagine 312 and asparagine 332. N-linked (GlcNAc...) asparagine glycosylation is found at asparagine 503 and asparagine 527. Residues 557 to 578 (LVAGLSAAGLSLLTLAPFLLWL) form a helical membrane-spanning segment. The Cytoplasmic segment spans residues 579–610 (RKCLRKAKKFVPASSCQSLESDGSYQKPSYIL).

The protein belongs to the selectin/LECAM family. In terms of assembly, interacts with SELPLG/PSGL1 and PODXL2 through the sialyl Lewis X epitope. SELPLG sulfation appears not to be required for this interaction.

It localises to the cell membrane. Its function is as follows. Cell-surface glycoprotein having a role in immunoadhesion. Mediates in the adhesion of blood neutrophils in cytokine-activated endothelium through interaction with SELPLG/PSGL1. May have a role in capillary morphogenesis. The sequence is that of E-selectin (SELE) from Homo sapiens (Human).